Reading from the N-terminus, the 119-residue chain is Protein Wnt-4 (119 aa).

A lipid anchor (O-palmitoleoyl serine; by PORCN) is attached at Ser-1. Cystine bridges form between Cys-69-Cys-100 and Cys-85-Cys-95. N-linked (GlcNAc...) asparagine glycosylation is present at Asn-86.

This sequence belongs to the Wnt family. Palmitoleoylation is required for efficient binding to frizzled receptors. Depalmitoleoylation leads to Wnt signaling pathway inhibition.

Its subcellular location is the secreted. The protein localises to the extracellular space. The protein resides in the extracellular matrix. Its function is as follows. Ligand for members of the frizzled family of seven transmembrane receptors. Plays an important role in embryonic development. The sequence is that of Protein Wnt-4 (WNT-4) from Eptatretus stoutii (Pacific hagfish).